We begin with the raw amino-acid sequence, 201 residues long: Protein LIGHT-DEPENDENT SHORT HYPOCOTYLS 2 (201 aa).

The segment covering 1 to 14 (MDLISQNHNNRNPN) has biased composition (polar residues). Disordered stretches follow at residues 1 to 37 (MDLI…YENQ) and 151 to 201 (SRGV…GATQ). A compositionally biased stretch (low complexity) spans 15–32 (TSLSTQTPSSFSSPPSSS). In terms of domain architecture, ALOG spans 33–160 (RYENQKRRDW…SRGVSYEKKR (128 aa)). The Nuclear localization signal motif lies at 158-162 (KKRKR).

Belongs to the plant homeotic and developmental regulators ALOG protein family.

It is found in the nucleus. In terms of biological role, probable transcription regulator that acts as a developmental regulator by promoting cell growth in response to light. This is Protein LIGHT-DEPENDENT SHORT HYPOCOTYLS 2 (LSH2) from Arabidopsis thaliana (Mouse-ear cress).